The chain runs to 976 residues: Dibasic-processing endoprotease (976 aa).

Residues 1-17 (MLRKFILGLLLASQAVA) form the signal peptide. An N-linked (GlcNAc...) asparagine glycan is attached at asparagine 156. A compositionally biased stretch (basic and acidic residues) spans 172–212 (AEEAQKAQDDKGDKKEDQKDDKKEGQEAQKEGDKEDNKGDD). Positions 172-246 (AEEAQKAQDD…VQWKPVDESM (75 aa)) are disordered. A compositionally biased stretch (acidic residues) spans 213–231 (KEDGEEDDDDDEDEDDDDA). One can recognise a Peptidase S8 domain in the interval 277–595 (QWYLHNVHKA…YGKLDASKIV (319 aa)). N-linked (GlcNAc...) asparagine glycans are attached at residues asparagine 291 and asparagine 299. Aspartate 311 (charge relay system) is an active-site residue. The N-linked (GlcNAc...) asparagine glycan is linked to asparagine 336. Residues histidine 349 and serine 528 each act as charge relay system in the active site. Residues 524–544 (HGGTSAAAPLAAGVFALALSV) form a helical membrane-spanning segment. Residues 604-737 (VNNQTSFHSE…QLNVFGEQKD (134 aa)) enclose the P/Homo B domain. N-linked (GlcNAc...) asparagine glycosylation is present at asparagine 606. Positions 733 to 848 (GEQKDKREEN…SDSHTSWWPD (116 aa)) are disordered. Over residues 734 to 830 (EQKDKREENK…EEKPEEKPVD (97 aa)) the composition is skewed to basic and acidic residues. A helical membrane pass occupies residues 855 to 875 (AWLYGAVLLVGGFIAVIGIYA). N-linked (GlcNAc...) asparagine glycosylation occurs at asparagine 886. The tract at residues 914–976 (PEDTHRRSGD…RDNDRQNLLG (63 aa)) is disordered. 2 stretches are compositionally biased toward basic and acidic residues: residues 915-928 (EDTH…DRLY) and 940-976 (MFRI…NLLG).

Belongs to the peptidase S8 family. Furin subfamily.

It is found in the membrane. This is Dibasic-processing endoprotease (XPR6) from Yarrowia lipolytica (strain CLIB 122 / E 150) (Yeast).